The chain runs to 358 residues: Alanine racemase (358 aa).

Lysine 35 acts as the Proton acceptor; specific for D-alanine in catalysis. Lysine 35 bears the N6-(pyridoxal phosphate)lysine mark. Arginine 130 serves as a coordination point for substrate. Catalysis depends on tyrosine 255, which acts as the Proton acceptor; specific for L-alanine. Methionine 303 contacts substrate.

The protein belongs to the alanine racemase family. Requires pyridoxal 5'-phosphate as cofactor.

The catalysed reaction is L-alanine = D-alanine. Its pathway is amino-acid biosynthesis; D-alanine biosynthesis; D-alanine from L-alanine: step 1/1. In terms of biological role, catalyzes the interconversion of L-alanine and D-alanine. May also act on other amino acids. The polypeptide is Alanine racemase (alr) (Shewanella baltica (strain OS185)).